Here is a 321-residue protein sequence, read N- to C-terminus: uncharacterized protein (321 aa).

Positions Met-1–Lys-56 constitute an HTH lacI-type domain. Residues Ile-4–Asn-23 constitute a DNA-binding region (H-T-H motif).

This is an uncharacterized protein from Bacillus subtilis (strain 168).